We begin with the raw amino-acid sequence, 509 residues long: Anaerobic nitric oxide reductase transcription regulator NorR (509 aa).

Residue Asp-56 is modified to 4-aspartylphosphate. The region spanning 186–415 (MIGRSPAMDR…LEHAIHRAAV (230 aa)) is the Sigma-54 factor interaction domain. ATP contacts are provided by residues 214-221 (GETGVGKE) and 277-286 (ADKGTLFLDE). The segment at residues 484 to 503 (WAATARALEMDGGNLHRLAR) is a DNA-binding region (H-T-H motif).

The protein operates within nitrogen metabolism; nitric oxide reduction. Functionally, required for the expression of anaerobic nitric oxide (NO) reductase, acts as a transcriptional activator for at least the norVW operon. Activation also requires sigma-54. This Aeromonas salmonicida (strain A449) protein is Anaerobic nitric oxide reductase transcription regulator NorR.